We begin with the raw amino-acid sequence, 157 residues long: MFDVLMYLFETYIHTEAELRVDQDKLEQDLTNAGFDREDIYNALLWLEKLADYQEGLAEPMQLASDPLSMRIYTPEECERLDASCRGFLLFLEQIQVLNLETREMVIERVLALDTAEFDLEDLKWVILMVLFNIPGCENAYQQMEELLFEVNEGMLH.

It belongs to the Smg family.

In Escherichia coli O7:K1 (strain IAI39 / ExPEC), this protein is Protein Smg.